We begin with the raw amino-acid sequence, 683 residues long: Protein distal antenna (683 aa).

Positions 7-58 constitute an HTH psq-type domain; it reads TKGKRPLRSLTPRDKIHAIQRIHDGESKASVARDIGVPESTLRGWCKNEDKL. A DNA-binding region (H-T-H motif) is located at residues 34–54; the sequence is KASVARDIGVPESTLRGWCKN. 5 disordered regions span residues 220–255, 336–369, 443–525, 572–597, and 652–683; these read TANN…SVKN, SPPI…TPSG, SETP…SDCI, NQHS…DEEE, and EPQV…RRRK. Positions 227-242 are enriched in low complexity; that stretch reads SKPSVQPPLQVQSPRS. Composition is skewed to polar residues over residues 338 to 352 and 445 to 460; these read PIRS…QHAQ and TPSV…NQLD. Positions 462 to 478 are enriched in acidic residues; the sequence is IEGDEVTDPDLDAEIEG. Low complexity predominate over residues 575–591; it reads SNNNDISASNNNNNNSN.

Homomers. Interacts with itself, danr, ey and dac to form a complex (or complexes) containing the RD factors.

Its subcellular location is the nucleus. Functionally, probable transcription factor with a role in the retinal determination (RD) network. Regulates ato expression and is required for normal R8 induction and differentiation. Danr appears to repress Dan expression, but Dan is required for Danr expression anterior to the morphogenetic furrow (MF). Dan and Danr lie downstream of so and require dac function for highest levels of expression. Contributes to differentiation of antenna-specific characteristics; effector gene that acts downstream of homothorax (hth), Distal-less (Dll), cut (ct) and spineless (ss) genes to control differentiation of distal antennal structures. The chain is Protein distal antenna from Drosophila pseudoobscura pseudoobscura (Fruit fly).